The primary structure comprises 290 residues: Appressoria-specific virulence factor GAS2 (290 aa).

An N-terminal signal peptide occupies residues Met1–Ala19. Residue Asn99 is glycosylated (N-linked (GlcNAc...) asparagine). A disordered region spans residues Leu121 to Lys140.

Its subcellular location is the cytoplasm. Its function is as follows. Appressoria-specific virulence factor required for appressorial penetration in host and lesion development. This is Appressoria-specific virulence factor GAS2 from Pyricularia oryzae (strain 70-15 / ATCC MYA-4617 / FGSC 8958) (Rice blast fungus).